A 421-amino-acid chain; its full sequence is Imidazolonepropionase (421 aa).

Fe(3+) is bound by residues histidine 81 and histidine 83. The Zn(2+) site is built by histidine 81 and histidine 83. 4-imidazolone-5-propanoate is bound by residues arginine 90, tyrosine 153, and histidine 186. Tyrosine 153 serves as a coordination point for N-formimidoyl-L-glutamate. Histidine 251 contributes to the Fe(3+) binding site. Histidine 251 is a binding site for Zn(2+). A 4-imidazolone-5-propanoate-binding site is contributed by glutamate 254. Fe(3+) is bound at residue aspartate 326. Zn(2+) is bound at residue aspartate 326. N-formimidoyl-L-glutamate contacts are provided by asparagine 328 and glycine 330. Serine 331 is a binding site for 4-imidazolone-5-propanoate.

Belongs to the metallo-dependent hydrolases superfamily. HutI family. Zn(2+) is required as a cofactor. Requires Fe(3+) as cofactor.

It is found in the cytoplasm. It carries out the reaction 4-imidazolone-5-propanoate + H2O = N-formimidoyl-L-glutamate. Its pathway is amino-acid degradation; L-histidine degradation into L-glutamate; N-formimidoyl-L-glutamate from L-histidine: step 3/3. In terms of biological role, catalyzes the hydrolytic cleavage of the carbon-nitrogen bond in imidazolone-5-propanoate to yield N-formimidoyl-L-glutamate. It is the third step in the universal histidine degradation pathway. This is Imidazolonepropionase from Streptococcus pyogenes serotype M2 (strain MGAS10270).